Consider the following 577-residue polypeptide: Isocitrate dehydrogenase kinase/phosphatase (577 aa).

ATP contacts are provided by residues 324–330 (APGIRGL) and K345. D380 is a catalytic residue.

It belongs to the AceK family.

The protein localises to the cytoplasm. It catalyses the reaction L-seryl-[isocitrate dehydrogenase] + ATP = O-phospho-L-seryl-[isocitrate dehydrogenase] + ADP + H(+). Its function is as follows. Bifunctional enzyme which can phosphorylate or dephosphorylate isocitrate dehydrogenase (IDH) on a specific serine residue. This is a regulatory mechanism which enables bacteria to bypass the Krebs cycle via the glyoxylate shunt in response to the source of carbon. When bacteria are grown on glucose, IDH is fully active and unphosphorylated, but when grown on acetate or ethanol, the activity of IDH declines drastically concomitant with its phosphorylation. In Pseudoalteromonas atlantica (strain T6c / ATCC BAA-1087), this protein is Isocitrate dehydrogenase kinase/phosphatase.